We begin with the raw amino-acid sequence, 142 residues long: Large ribosomal subunit protein uL23 (142 aa).

Lys-61 is covalently cross-linked (Glycyl lysine isopeptide (Lys-Gly) (interchain with G-Cter in SUMO)).

Belongs to the universal ribosomal protein uL23 family. Component of the large ribosomal subunit (LSU). Mature yeast ribosomes consist of a small (40S) and a large (60S) subunit. The 40S small subunit contains 1 molecule of ribosomal RNA (18S rRNA) and 33 different proteins (encoded by 57 genes). The large 60S subunit contains 3 rRNA molecules (25S, 5.8S and 5S rRNA) and 46 different proteins (encoded by 81 genes). uL23 is associated with the polypeptide exit tunnel.

It localises to the cytoplasm. Component of the ribosome, a large ribonucleoprotein complex responsible for the synthesis of proteins in the cell. The small ribosomal subunit (SSU) binds messenger RNAs (mRNAs) and translates the encoded message by selecting cognate aminoacyl-transfer RNA (tRNA) molecules. The large subunit (LSU) contains the ribosomal catalytic site termed the peptidyl transferase center (PTC), which catalyzes the formation of peptide bonds, thereby polymerizing the amino acids delivered by tRNAs into a polypeptide chain. The nascent polypeptides leave the ribosome through a tunnel in the LSU and interact with protein factors that function in enzymatic processing, targeting, and the membrane insertion of nascent chains at the exit of the ribosomal tunnel. uL23 is a major component of the universal docking site for these factors at the polypeptide exit tunnel. This Saccharomyces cerevisiae (strain ATCC 204508 / S288c) (Baker's yeast) protein is Large ribosomal subunit protein uL23.